The following is a 215-amino-acid chain: Large ribosomal subunit protein uL4c (215 aa).

The tract at residues 51-87 is disordered; sequence QKQGTVSTKTRSEVRGGGKKPWRQKGTGRARAGSSRS. The segment covering 67-78 has biased composition (basic residues); that stretch reads GGKKPWRQKGTG.

It belongs to the universal ribosomal protein uL4 family. As to quaternary structure, part of the 50S ribosomal subunit.

It is found in the plastid. The protein resides in the chloroplast. Probably binds the 23S rRNA. This is Large ribosomal subunit protein uL4c (rpl4) from Thalassiosira pseudonana (Marine diatom).